A 130-amino-acid chain; its full sequence is Small ribosomal subunit protein bS16 (130 aa).

The span at 98 to 109 (AAAKQAAKDAAE) shows a compositional bias: basic and acidic residues. The segment at 98-130 (AAAKQAAKDAAEAKAAAAAEAEAPAADAEASEG) is disordered. Residues 110–130 (AKAAAAAEAEAPAADAEASEG) show a composition bias toward low complexity.

This sequence belongs to the bacterial ribosomal protein bS16 family.

This is Small ribosomal subunit protein bS16 from Synechococcus sp. (strain CC9902).